A 561-amino-acid polypeptide reads, in one-letter code: Glutamate--tRNA ligase (561 aa).

The short motif at P107–H117 is the 'HIGH' region element.

The protein belongs to the class-I aminoacyl-tRNA synthetase family. Glutamate--tRNA ligase type 2 subfamily.

It is found in the cytoplasm. It carries out the reaction tRNA(Glu) + L-glutamate + ATP = L-glutamyl-tRNA(Glu) + AMP + diphosphate. Catalyzes the attachment of glutamate to tRNA(Glu) in a two-step reaction: glutamate is first activated by ATP to form Glu-AMP and then transferred to the acceptor end of tRNA(Glu). The protein is Glutamate--tRNA ligase of Methanospirillum hungatei JF-1 (strain ATCC 27890 / DSM 864 / NBRC 100397 / JF-1).